The chain runs to 100 residues: RING finger protein Z (100 aa).

Gly-2 is lipidated: N-myristoyl glycine; by host. Residues 43–79 (CRCCWFANTNLIKCSDHYICLKCLNIMLGKSSFCDIC) form an RING-type; atypical zinc finger. Residues 93-96 (PSAP) carry the PTAP/PSAP motif motif.

The protein belongs to the arenaviridae Z protein family. As to quaternary structure, interacts with protein NP; this interaction probably directs the encapsidated genome to budding sites. Interacts (via RING domain) with polymerase L; this interaction inhibits viral transcription and replication, Z partially blocks the product exit tunnel for the releasing nascent RNA product. Interacts with the glycoprotein complex; this interaction plays a role in virion budding. Interacts with host eIF4E; this interaction results in eIF4E reduced affinity for its substrate, the 5'-m7 G cap structure. Interacts (via late-budding domain) with host TSG101; this interaction is essential for budding and release of viral particles. Interacts with host RPLP0; this interaction may serve to load ribosome-like particles inside the virion. Interacts with host PML; this interaction induces PML bodies redistribution in the cytoplasm upon viral infection. Myristoylation is required for the role of RING finger protein Z in assembly and budding.

The protein localises to the virion. Its subcellular location is the host cytoplasm. The protein resides in the host perinuclear region. It localises to the host cell membrane. Its function is as follows. Plays a crucial role in virion assembly and budding. Expressed late in the virus life cycle, it acts as an inhibitor of viral transcription and RNA synthesis by interacting with the viral polymerase L. Presumably recruits the NP encapsidated genome to cellular membranes at budding sites via direct interaction with NP. Plays critical roles in the final steps of viral release by interacting with host TSG101, a member of the vacuolar protein-sorting pathway and using other cellular host proteins involved in vesicle formation pathway. The budding of the virus progeny occurs after association of protein Z with the viral glycoprotein complex SSP-GP1-GP2 at the cell periphery, step that requires myristoylation of protein Z. Also selectively represses protein production by associating with host eIF4E. In cell-based minigenome assay, has an inhibitory effect on the ribonucleoprotein machinery (vRNP), which is responsible for the replication and transcription of the viral genome. This Homo sapiens (Human) protein is RING finger protein Z.